The primary structure comprises 485 residues: Glutamyl-tRNA(Gln) amidotransferase subunit A (485 aa).

Residues Lys79 and Ser154 each act as charge relay system in the active site. Residue Ser178 is the Acyl-ester intermediate of the active site.

It belongs to the amidase family. GatA subfamily. Heterotrimer of A, B and C subunits.

The catalysed reaction is L-glutamyl-tRNA(Gln) + L-glutamine + ATP + H2O = L-glutaminyl-tRNA(Gln) + L-glutamate + ADP + phosphate + H(+). Allows the formation of correctly charged Gln-tRNA(Gln) through the transamidation of misacylated Glu-tRNA(Gln) in organisms which lack glutaminyl-tRNA synthetase. The reaction takes place in the presence of glutamine and ATP through an activated gamma-phospho-Glu-tRNA(Gln). The sequence is that of Glutamyl-tRNA(Gln) amidotransferase subunit A from Geobacillus stearothermophilus (Bacillus stearothermophilus).